Reading from the N-terminus, the 224-residue chain is ATP-dependent dethiobiotin synthetase BioD (224 aa).

12–17 (GVGKTF) contributes to the ATP binding site. T16 contributes to the Mg(2+) binding site. The active site involves K37. Residue T41 coordinates substrate. ATP is bound by residues N52, 107–110 (EGAG), 167–168 (GS), 197–199 (PEG), and E204. Mg(2+)-binding residues include N52 and E107.

It belongs to the dethiobiotin synthetase family. As to quaternary structure, homodimer. It depends on Mg(2+) as a cofactor.

It localises to the cytoplasm. The enzyme catalyses (7R,8S)-7,8-diammoniononanoate + CO2 + ATP = (4R,5S)-dethiobiotin + ADP + phosphate + 3 H(+). Its pathway is cofactor biosynthesis; biotin biosynthesis; biotin from 7,8-diaminononanoate: step 1/2. In terms of biological role, catalyzes a mechanistically unusual reaction, the ATP-dependent insertion of CO2 between the N7 and N8 nitrogen atoms of 7,8-diaminopelargonic acid (DAPA, also called 7,8-diammoniononanoate) to form a ureido ring. The polypeptide is ATP-dependent dethiobiotin synthetase BioD (Corynebacterium glutamicum (strain ATCC 13032 / DSM 20300 / JCM 1318 / BCRC 11384 / CCUG 27702 / LMG 3730 / NBRC 12168 / NCIMB 10025 / NRRL B-2784 / 534)).